The chain runs to 189 residues: Adenylate kinase (189 aa).

An ATP-binding site is contributed by G10 to T15. Residues S30–V59 are NMP. AMP-binding positions include T31, R36, D57–V59, G85–R88, and Q92. Residues E126 to D136 are LID. R127 is a binding site for ATP. 2 residues coordinate AMP: R133 and R144. G172 contacts ATP.

Belongs to the adenylate kinase family. Monomer.

The protein resides in the cytoplasm. It carries out the reaction AMP + ATP = 2 ADP. It participates in purine metabolism; AMP biosynthesis via salvage pathway; AMP from ADP: step 1/1. Functionally, catalyzes the reversible transfer of the terminal phosphate group between ATP and AMP. Plays an important role in cellular energy homeostasis and in adenine nucleotide metabolism. The chain is Adenylate kinase from Thermobifida fusca (strain YX).